We begin with the raw amino-acid sequence, 163 residues long: NADH-quinone oxidoreductase subunit I (163 aa).

2 consecutive 4Fe-4S ferredoxin-type domains span residues 53 to 83 and 94 to 123; these read LRRY…IEAG and VRYD…EGPN. [4Fe-4S] cluster contacts are provided by cysteine 63, cysteine 66, cysteine 69, cysteine 73, cysteine 103, cysteine 106, cysteine 109, and cysteine 113.

The protein belongs to the complex I 23 kDa subunit family. As to quaternary structure, NDH-1 is composed of 14 different subunits. Subunits NuoA, H, J, K, L, M, N constitute the membrane sector of the complex. It depends on [4Fe-4S] cluster as a cofactor.

Its subcellular location is the cell inner membrane. The catalysed reaction is a quinone + NADH + 5 H(+)(in) = a quinol + NAD(+) + 4 H(+)(out). Its function is as follows. NDH-1 shuttles electrons from NADH, via FMN and iron-sulfur (Fe-S) centers, to quinones in the respiratory chain. The immediate electron acceptor for the enzyme in this species is believed to be ubiquinone. Couples the redox reaction to proton translocation (for every two electrons transferred, four hydrogen ions are translocated across the cytoplasmic membrane), and thus conserves the redox energy in a proton gradient. The chain is NADH-quinone oxidoreductase subunit I from Bartonella henselae (strain ATCC 49882 / DSM 28221 / CCUG 30454 / Houston 1) (Rochalimaea henselae).